A 332-amino-acid polypeptide reads, in one-letter code: 2-hydroxyacid dehydrogenase homolog 2 (332 aa).

NAD(+)-binding positions include 154–155, 233–235, and Asp259; these read KI and TSR. Residue Arg235 is part of the active site. Residue Glu264 is part of the active site. The active-site Proton donor is the His296. Residue 296 to 299 coordinates NAD(+); that stretch reads HQAF.

This sequence belongs to the D-isomer specific 2-hydroxyacid dehydrogenase family.

The protein localises to the cytoplasm. Its subcellular location is the nucleus. This chain is 2-hydroxyacid dehydrogenase homolog 2, found in Schizosaccharomyces pombe (strain 972 / ATCC 24843) (Fission yeast).